The sequence spans 550 residues: Cytokinin dehydrogenase 10 (550 aa).

Positions 1–26 (MMPRAQLTTFLIVTSFLSTVPYLRAP) are cleaved as a signal peptide. One can recognise an FAD-binding PCMH-type domain in the interval 64-245 (VHATPNGVFR…TRARIRLEPA (182 aa)). FAD contacts are provided by Gly100, Lys101, and Gly102. Pros-8alpha-FAD histidine is present on His103. FAD is bound by residues Ser104, Gln108, Asp169, Thr174, Ser180, Ile184, and Ile235. Asn289 carries N-linked (GlcNAc...) asparagine glycosylation. Tyr489, Ser524, and Gln527 together coordinate FAD. Residues 523–550 (LSPGQGIFPPPPPPSPPPPAAGEPITAS) form a disordered region. Residues 530-543 (FPPPPPPSPPPPAA) show a composition bias toward pro residues.

Belongs to the oxygen-dependent FAD-linked oxidoreductase family. In terms of assembly, monomer. The cofactor is FAD.

Its subcellular location is the secreted. It localises to the extracellular space. The enzyme catalyses N(6)-dimethylallyladenine + A + H2O = 3-methyl-2-butenal + adenine + AH2. In terms of biological role, catalyzes the oxidation of cytokinins, a family of N(6)-substituted adenine derivatives that are plant hormones, where the substituent is an isopentenyl group. The sequence is that of Cytokinin dehydrogenase 10 (CKX10) from Oryza sativa subsp. japonica (Rice).